A 235-amino-acid polypeptide reads, in one-letter code: Large ribosomal subunit protein uL1 (235 aa).

It belongs to the universal ribosomal protein uL1 family. Part of the 50S ribosomal subunit.

Binds directly to 23S rRNA. The L1 stalk is quite mobile in the ribosome, and is involved in E site tRNA release. Functionally, protein L1 is also a translational repressor protein, it controls the translation of the L11 operon by binding to its mRNA. The sequence is that of Large ribosomal subunit protein uL1 from Prochlorococcus marinus (strain MIT 9515).